The sequence spans 215 residues: LexA repressor (215 aa).

A DNA-binding region (H-T-H motif) is located at residues Arg28 to Arg48. Catalysis depends on for autocatalytic cleavage activity residues Ser133 and Lys170.

It belongs to the peptidase S24 family. As to quaternary structure, homodimer.

The enzyme catalyses Hydrolysis of Ala-|-Gly bond in repressor LexA.. In terms of biological role, represses a number of genes involved in the response to DNA damage (SOS response), including recA and lexA. In the presence of single-stranded DNA, RecA interacts with LexA causing an autocatalytic cleavage which disrupts the DNA-binding part of LexA, leading to derepression of the SOS regulon and eventually DNA repair. This chain is LexA repressor, found in Burkholderia thailandensis (strain ATCC 700388 / DSM 13276 / CCUG 48851 / CIP 106301 / E264).